The chain runs to 60 residues: Large ribosomal subunit protein uL30 (60 aa).

Belongs to the universal ribosomal protein uL30 family. In terms of assembly, part of the 50S ribosomal subunit.

The polypeptide is Large ribosomal subunit protein uL30 (Streptomyces coelicolor (strain ATCC BAA-471 / A3(2) / M145)).